The following is a 447-amino-acid chain: Glutamyl-tRNA reductase (447 aa).

Residues 49 to 52, Ser109, 114 to 116, and Gln120 each bind substrate; these read TCNR and EQQ. The active-site Nucleophile is the Cys50. An NADP(+)-binding site is contributed by 189–194; it reads GAGSMG.

It belongs to the glutamyl-tRNA reductase family. As to quaternary structure, homodimer.

It catalyses the reaction (S)-4-amino-5-oxopentanoate + tRNA(Glu) + NADP(+) = L-glutamyl-tRNA(Glu) + NADPH + H(+). Its pathway is porphyrin-containing compound metabolism; protoporphyrin-IX biosynthesis; 5-aminolevulinate from L-glutamyl-tRNA(Glu): step 1/2. Functionally, catalyzes the NADPH-dependent reduction of glutamyl-tRNA(Glu) to glutamate 1-semialdehyde (GSA). The sequence is that of Glutamyl-tRNA reductase from Mycobacterium sp. (strain JLS).